The following is a 245-amino-acid chain: 5-oxoprolinase subunit A (245 aa).

Belongs to the LamB/PxpA family. Forms a complex composed of PxpA, PxpB and PxpC.

The enzyme catalyses 5-oxo-L-proline + ATP + 2 H2O = L-glutamate + ADP + phosphate + H(+). Its function is as follows. Catalyzes the cleavage of 5-oxoproline to form L-glutamate coupled to the hydrolysis of ATP to ADP and inorganic phosphate. The protein is 5-oxoprolinase subunit A of Haemophilus influenzae (strain 86-028NP).